The sequence spans 248 residues: Probable phosphatase VCM66_A0854 (248 aa).

Positions 8, 10, 16, 41, 74, 102, 132, 194, and 196 each coordinate Zn(2+).

It belongs to the PHP family. The cofactor is Zn(2+).

The polypeptide is Probable phosphatase VCM66_A0854 (Vibrio cholerae serotype O1 (strain M66-2)).